Consider the following 170-residue polypeptide: Large ribosomal subunit protein uL16 (170 aa).

It belongs to the universal ribosomal protein uL16 family.

The polypeptide is Large ribosomal subunit protein uL16 (Methanospirillum hungatei JF-1 (strain ATCC 27890 / DSM 864 / NBRC 100397 / JF-1)).